We begin with the raw amino-acid sequence, 1403 residues long: Centrosomal protein of 162 kDa (1403 aa).

A disordered region spans residues glutamate 19 to threonine 44. The segment covering glutamate 26–proline 35 has biased composition (polar residues). Phosphoserine is present on residues serine 156 and serine 159. Disordered stretches follow at residues asparagine 171 to glycine 235, aspartate 305 to serine 342, and asparagine 449 to serine 586. Residues glutamate 176–proline 189 are compositionally biased toward basic and acidic residues. The segment covering tyrosine 192–glutamate 204 has biased composition (acidic residues). The span at leucine 206–glutamate 220 shows a compositional bias: basic and acidic residues. The segment covering asparagine 449–arginine 466 has biased composition (polar residues). Serine 468 bears the Phosphoserine mark. Basic residues predominate over residues proline 481 to proline 496. Residues alanine 504–glutamine 517 show a composition bias toward polar residues. 2 stretches are compositionally biased toward basic and acidic residues: residues leucine 522–lysine 532 and proline 567–aspartate 581. 3 coiled-coil regions span residues lysine 610–arginine 1120, glutamate 1170–serine 1205, and cysteine 1234–glutamine 1385.

This sequence belongs to the CEP162 family. Interacts with alpha-tubulin. Interacts with CPNE4. Interacts with CEP290.

It localises to the cytoplasm. The protein localises to the cytoskeleton. Its subcellular location is the microtubule organizing center. It is found in the centrosome. The protein resides in the centriole. It localises to the spindle. The protein localises to the nucleus. Functionally, required to promote assembly of the transition zone in primary cilia. Acts by specifically recognizing and binding the axonemal microtubule. Localizes to the distal ends of centrioles before ciliogenesis and directly binds to axonemal microtubule, thereby promoting and restricting transition zone formation specifically at the cilia base. Required to mediate CEP290 association with microtubules. The sequence is that of Centrosomal protein of 162 kDa (Cep162) from Rattus norvegicus (Rat).